The primary structure comprises 880 residues: Translation initiation factor IF-2 (880 aa).

2 stretches are compositionally biased toward basic and acidic residues: residues 180 to 194 (QEAA…EAAK) and 202 to 228 (LAEE…DHHI). Residues 180-289 (QEAATKRKQD…APESMAHGFN (110 aa)) form a disordered region. A compositionally biased stretch (basic residues) spans 249–262 (GRRARNKSNAKKRG). The region spanning 380–549 (SRAPVVTIMG…LLQAEVLELK (170 aa)) is the tr-type G domain. Positions 389–396 (GHVDHGKT) are G1. Residue 389-396 (GHVDHGKT) coordinates GTP. A G2 region spans residues 414-418 (GITQH). Positions 435-438 (DTPG) are G3. Residues 435 to 439 (DTPGH) and 489 to 492 (NKMD) contribute to the GTP site. Residues 489-492 (NKMD) are G4. Residues 525–527 (SAK) form a G5 region.

It belongs to the TRAFAC class translation factor GTPase superfamily. Classic translation factor GTPase family. IF-2 subfamily.

The protein localises to the cytoplasm. In terms of biological role, one of the essential components for the initiation of protein synthesis. Protects formylmethionyl-tRNA from spontaneous hydrolysis and promotes its binding to the 30S ribosomal subunits. Also involved in the hydrolysis of GTP during the formation of the 70S ribosomal complex. The sequence is that of Translation initiation factor IF-2 from Shewanella baltica (strain OS223).